Here is a 236-residue protein sequence, read N- to C-terminus: Envelope glycoprotein (236 aa).

Residues 1-202 (CQFDGNTISG…EWILGVLNGN (202 aa)) are Lumenal-facing. An N-linked (GlcNAc...) asparagine; by host glycan is attached at Asn25. 5 disulfide bridges follow: Cys67–Cys97, Cys90–Cys142, Cys107–Cys112, Cys143–Cys148, and Cys182–Cys186. A helical membrane pass occupies residues 203–223 (WMVVAVLIALLILSILLFTLC). Binding to the ribonucleoprotein stretches follow at residues 219–231 (LFTL…PSYR) and 219–236 (LFTL…EHKP). The Cytoplasmic portion of the chain corresponds to 224-236 (CPRRPSYRKEHKP).

The protein belongs to the hantavirus envelope glycoprotein family. As to quaternary structure, homodimer. Homotetramer; forms heterotetrameric Gn-Gc spikes in the pre-fusion conformation. Homotrimer; forms homotrimer in the post-fusion conformation at acidic pH. Interacts (via C-terminus) with the nucleoprotein. Post-translationally, envelope polyprotein precursor is quickly cleaved in vivo just after synthesis, presumably by host signal peptidase.

It is found in the virion membrane. The protein localises to the host cell surface. Its subcellular location is the host Golgi apparatus membrane. The protein resides in the host endoplasmic reticulum membrane. Functionally, forms homotetramers with glycoprotein N at the surface of the virion. Attaches the virion to host cell receptors including integrin ITGAV/ITGB3. This attachment induces virion internalization predominantly through clathrin-dependent endocytosis. Class II fusion protein that promotes fusion of viral membrane with host endosomal membrane after endocytosis of the virion. The protein is Envelope glycoprotein (GP) of Homo sapiens (Human).